The chain runs to 134 residues: DNA-directed RNA polymerase subunit omega (134 aa).

Residues 77–108 (IDEPEPDPASLLAAGGNASASGDEEEDAPEAV) form a disordered region. Residues 85–97 (ASLLAAGGNASAS) are compositionally biased toward low complexity.

The protein belongs to the RNA polymerase subunit omega family. In terms of assembly, the RNAP catalytic core consists of 2 alpha, 1 beta, 1 beta' and 1 omega subunit. When a sigma factor is associated with the core the holoenzyme is formed, which can initiate transcription.

The enzyme catalyses RNA(n) + a ribonucleoside 5'-triphosphate = RNA(n+1) + diphosphate. Promotes RNA polymerase assembly. Latches the N- and C-terminal regions of the beta' subunit thereby facilitating its interaction with the beta and alpha subunits. The sequence is that of DNA-directed RNA polymerase subunit omega from Rhizobium rhizogenes (strain K84 / ATCC BAA-868) (Agrobacterium radiobacter).